A 467-amino-acid chain; its full sequence is UDP-glycosyltransferase 71D2 (467 aa).

UDP-alpha-D-glucose contacts are provided by residues Ser283, 339–341 (SPQ), 356–364 (HCGWNSIVE), and 378–381 (YAEQ).

This sequence belongs to the UDP-glycosyltransferase family.

In Arabidopsis thaliana (Mouse-ear cress), this protein is UDP-glycosyltransferase 71D2 (UGT71D2).